Consider the following 444-residue polypeptide: Probable glycine dehydrogenase (decarboxylating) subunit 1 (444 aa).

The protein belongs to the GcvP family. N-terminal subunit subfamily. As to quaternary structure, the glycine cleavage system is composed of four proteins: P, T, L and H. In this organism, the P 'protein' is a heterodimer of two subunits.

It catalyses the reaction N(6)-[(R)-lipoyl]-L-lysyl-[glycine-cleavage complex H protein] + glycine + H(+) = N(6)-[(R)-S(8)-aminomethyldihydrolipoyl]-L-lysyl-[glycine-cleavage complex H protein] + CO2. The glycine cleavage system catalyzes the degradation of glycine. The P protein binds the alpha-amino group of glycine through its pyridoxal phosphate cofactor; CO(2) is released and the remaining methylamine moiety is then transferred to the lipoamide cofactor of the H protein. In Carboxydothermus hydrogenoformans (strain ATCC BAA-161 / DSM 6008 / Z-2901), this protein is Probable glycine dehydrogenase (decarboxylating) subunit 1.